Here is a 395-residue protein sequence, read N- to C-terminus: Serine/threonine-protein kinase BIK1 (395 aa).

Glycine 2 is lipidated: N-myristoyl glycine. Cysteine 4 is lipidated: S-palmitoyl cysteine. Serine 26 bears the Phosphoserine mark. Lysine 31 participates in a covalent cross-link: Glycyl lysine isopeptide (Lys-Gly) (interchain with G-Cter in ubiquitin). Phosphoserine occurs at positions 32, 33, and 34. Position 35 is a phosphothreonine (threonine 35). Residue lysine 41 forms a Glycyl lysine isopeptide (Lys-Gly) (interchain with G-Cter in ubiquitin) linkage. The residue at position 42 (threonine 42) is a Phosphothreonine. The residue at position 48 (serine 48) is a Phosphoserine; by autocatalysis and BAK1. Threonine 50 is modified (phosphothreonine). Serine 54 carries the post-translational modification Phosphoserine; by autocatalysis. Position 56 is a phosphothreonine; by autocatalysis (threonine 56). Threonine 64 carries the phosphothreonine modification. In terms of domain architecture, Protein kinase spans 67–356 (FRPDSVIGEG…RALQQLQDNL (290 aa)). Phosphoserine; by autocatalysis and BAK1 is present on serine 71. Position 73 to 81 (73 to 81 (IGEGGFGCV)) interacts with ATP. Serine 89 bears the Phosphoserine; by EFR mark. A Required for physical interaction with and phosphorylation of downstream signaling proteins (e.g. WRKY33, WRKY50, WRKY51 and WRKY57) to activate EFR-mediated immune signaling motif is present at residues 89–90 (ST). Phosphothreonine; by EFR is present on threonine 90. A Glycyl lysine isopeptide (Lys-Gly) (interchain with G-Cter in ubiquitin) cross-link involves residue lysine 95. Lysine 105 contributes to the ATP binding site. Threonine 120 is subject to Phosphothreonine; by EFR. A Phosphoserine; by autocatalysis modification is found at serine 129. Serine 129 carries the phosphoserine; by EFR modification. Position 150 is a phosphotyrosine (tyrosine 150). Tyrosine 168 bears the Phosphotyrosine; by autocatalysis mark. Glycyl lysine isopeptide (Lys-Gly) (interchain with G-Cter in ubiquitin) cross-links involve residues lysine 170 and lysine 186. Serine 193 is subject to Phosphoserine. Aspartate 202 serves as the catalytic Proton acceptor. Serine 206 bears the Phosphoserine; by autocatalysis and BAK1 mark. Phosphotyrosine; by autocatalysis is present on tyrosine 214. At serine 219 the chain carries Phosphoserine. Serine 233 is modified (phosphoserine; by autocatalysis). An O-UMP-serine; by Xanthomonas campestris effector XopAC/AvrAC; alternate modification is found at serine 236. Serine 236 carries the phosphoserine; by autocatalysis and BAK1; alternate modification. The residue at position 237 (threonine 237) is an O-UMP-threonine; by Xanthomonas campestris effector XopAC/AvrAC; alternate. Threonine 237 is subject to Phosphothreonine; by autocatalysis and BAK1; alternate. Threonine 242 is subject to Phosphothreonine; by autocatalysis and BAK1. Tyrosine 243 is modified (phosphotyrosine). At tyrosine 250 the chain carries Phosphotyrosine; by autocatalysis. Phosphoserine; by autocatalysis is present on residues serine 252 and serine 253. Residue lysine 286 forms a Glycyl lysine isopeptide (Lys-Gly) (interchain with G-Cter in ubiquitin) linkage. The residue at position 314 (threonine 314) is a Phosphothreonine; by autocatalysis. A Glycyl lysine isopeptide (Lys-Gly) (interchain with G-Cter in ubiquitin) cross-link involves residue lysine 337. A Phosphothreonine modification is found at threonine 341. A compositionally biased stretch (polar residues) spans 354-365 (DNLGKPSQTNPV). Residues 354 to 395 (DNLGKPSQTNPVKDTKKLGFKTGTTKSSEKRFTQKPFGRHLV) are disordered. Residue lysine 358 forms a Glycyl lysine isopeptide (Lys-Gly) (interchain with G-Cter in ubiquitin) linkage. Serine 360 carries the phosphoserine; by autocatalysis and BAK1 modification. Position 362 is a phosphothreonine; by autocatalysis and BAK1 (threonine 362). Lysine 366 is covalently cross-linked (Glycyl lysine isopeptide (Lys-Gly) (interchain with G-Cter in ubiquitin)). Phosphothreonine; by autocatalysis and BAK1 is present on threonine 368. Phosphothreonine occurs at positions 375 and 377.

Belongs to the protein kinase superfamily. Ser/Thr protein kinase family. Interacts with FLS2. Activation of FLS2 by flagellin (flg22) induces the dissociation of the complex. Interacts with BAK1. Interacts with the Xanthomonas campestris effector XopAC/AvrAC. Interacts with CPK28. Interacts with PEPR1. Interacts with PP2C38. Interacts with BRI1. Interacts with RBOHD. Binds to EFR when not phosphorylated at Ser-89 and Thr-90, in the absence of pathogen elicitor; dissociates upon pathogen-associated molecular pattern (PAMP)-triggered activation by EFR-mediated phosphorylation. Interacts directly with and phosphorylates WRKY transcription factors in the nucleus involved in the jasmonic acid (JA) and salicylic acid (SA) regulation (e.g. WRKY33, WRKY50, WRKY51 and WRKY57) to modulate defense hormones during plant immunity. Binds to ATL44/RHA3A and ATL45/RHA3B. Binds to SIK1 to be phosphorylated and stabilized. Post-translationally, phosphorylated by SIK1 to be stabilized. Phosphorylated by FLS2 and BAK1. Autophosphorylated. Autophosphorylation is reduced in presence of the Xanthomonas campestris effector XopAC/AvrAC. Phosphorylated, especially by EFR at Ser-89 and Thr-90, in response to the microbe-associated molecular pattern (MAMP) flg22. Phosphorylation in response to flg22 is abolished in presence of the Xanthomonas campestris effector XopAC/AvrAC. Phosphorylated at Ser-233, Ser-236 and Thr-237 by PEPR1. Phosphorylated at Tyr-150, Tyr-243 and Tyr-250. Tyrosine phosphorylation is required for BIK1 function in plant innate immunity. Uridylylated at Ser-236 and Thr-237 by the Xanthomonas campestris effector XopAC/AvrAC. This conceals conserved phosphorylation sites in the activation loop, reducing BIK1 kinase activity and consequently inhibiting downstream signaling. In terms of processing, monoubiquitinated by ATL44/RHA3A and ATL45/RHA3B following phosphorylation upon the recognition of microbe-associated molecular patterns (MAMPs, e.g. flg22) by pattern recognition receptors (PRRs), then released from the FLS2/BAK1 complex and internalized dynamically into endocytic compartments followed by the activation of immune signaling.

It is found in the cell membrane. The protein resides in the endosome membrane. It localises to the nucleus. The catalysed reaction is L-seryl-[protein] + ATP = O-phospho-L-seryl-[protein] + ADP + H(+). It carries out the reaction L-threonyl-[protein] + ATP = O-phospho-L-threonyl-[protein] + ADP + H(+). Its activity is regulated as follows. Kinase activation is repressed by the phosphatase PP2C38. Plays a central role in immune responses. Required to activate the resistance responses to necrotrophic pathogens, including the regulation of defense hormone expression (e.g. jasmonic acid (JA) and salicylic acid (SA)). Phosphorylates FLS2 and BAK1. Involved in pathogen-associated molecular pattern (PAMP)-triggered immunity (PTI) signaling, including calcium signaling, and defense responses downstream of FLS2; upon PAMP recognition, first phosphorylated by FLS2 and SIK1 prior to being monoubiquitinated by ATL44/RHA3A and ATL45/RHA3B at the plasma membrane, then internalized dynamically into endocytic compartments together with FLS2. Acts additively with PBL1 in PTI defenses. Acts as a positive regulator of the PAMP flg22-induced increase of cytosolic calcium. Upon flg22 perception, phosphorylates and activates the calcium-permeable channel OSCA1.3, promoting stomatal closure. Phosphorylates the NADPH oxidase RBOHD at specific sites in a calcium-independent manner to enhance reactive oxygen species (ROS) generation upon flg22 perception. ROS production in response to flg22 controls stomatal movement and restriction of bacterial entry into leaf tissues. Seems not required for flg22-induced MAPK activation. Required for Pep1-induced defenses. Pep1 is an endogenous elicitor that potentiates PAMP-inducible plant responses. In association with PEPR1, acts downstream of the canonical ethylene signaling cascade to regulate ethylene responses. Involved in ethylene signaling. Destabilizes EIN3, the key transcription activator in ethylene signaling, and represses EIN3-dependent transcription. Acts as a negative regulator in brassinosteroid (BR) signaling. Functions in BR signaling by direct interaction with the BR receptor BRI1 cytosolic kinase domain. Required during SCOOP small peptides (e.g. SCOOP10 and SCOOP12) perception and signaling; receptor-like cytosolic kinases (RLCK) activated by BAK1/SERK3 and SERK4 coreceptors when associated with MIK2 upon the perception of SCOOP peptides. In terms of biological role, (Microbial infection) Xanthomonas campestris effector AvrAC/XopAC-mediated uridylylation prevents activation by phosphorylation at the same residues, thus affecting immune responses and reducing defense responses toward X.campestris, mediating avrAC/XopAC virulence functions. This Arabidopsis thaliana (Mouse-ear cress) protein is Serine/threonine-protein kinase BIK1.